A 607-amino-acid polypeptide reads, in one-letter code: Pescadillo homolog (607 aa).

Positions A301–L341 are disordered. Acidic residues predominate over residues D313–L324. Basic and acidic residues predominate over residues D325–K339. Positions S348 to C441 constitute a BRCT domain. A coiled-coil region spans residues E497–K604. Residues Q531–N607 are disordered. Basic and acidic residues-rich tracts occupy residues R544 to S561 and R595 to N607.

Belongs to the pescadillo family. Component of the NOP7 complex, composed of erb1/SPBC4F6.13c, ppp1/SPBC19F5.05c and ytm1/SPAC890.04c. Within the NOP7 complex erb1/SPBC4F6.13c appears to interact directly with ppp1/SPBC19F5.05c and ytm1/SPAC890.04c. The NOP7 complex also associates with the 66S pre-ribosome.

Its subcellular location is the nucleus. It localises to the nucleoplasm. The protein localises to the nucleolus. Component of the NOP7 complex, which is required for maturation of the 25S and 5.8S ribosomal RNAs and formation of the 60S ribosome. In Schizosaccharomyces pombe (strain 972 / ATCC 24843) (Fission yeast), this protein is Pescadillo homolog (ppp1).